Reading from the N-terminus, the 152-residue chain is Lipoprotein signal peptidase (152 aa).

3 consecutive transmembrane segments (helical) span residues 5–25 (LFVL…FWIV), 61–81 (WFFV…LATH), and 84–104 (LNIW…GNFI). Residues D114 and D130 contribute to the active site. A helical transmembrane segment spans residues 125–145 (IFNVADSYLTVGVILLVICLW).

Belongs to the peptidase A8 family.

The protein localises to the cell membrane. The catalysed reaction is Release of signal peptides from bacterial membrane prolipoproteins. Hydrolyzes -Xaa-Yaa-Zaa-|-(S,diacylglyceryl)Cys-, in which Xaa is hydrophobic (preferably Leu), and Yaa (Ala or Ser) and Zaa (Gly or Ala) have small, neutral side chains.. It functions in the pathway protein modification; lipoprotein biosynthesis (signal peptide cleavage). Its function is as follows. This protein specifically catalyzes the removal of signal peptides from prolipoproteins. The polypeptide is Lipoprotein signal peptidase (Streptococcus pyogenes serotype M3 (strain ATCC BAA-595 / MGAS315)).